A 90-amino-acid chain; its full sequence is Protein RALF-like 29 (90 aa).

Positions 1–25 are cleaved as a signal peptide; the sequence is MIKTKEVTFVTILIVLCVFISTIHA. 2 disulfide bridges follow: cysteine 41–cysteine 50 and cysteine 63–cysteine 69.

The protein belongs to the plant rapid alkalinization factor (RALF) family.

The protein resides in the secreted. In terms of biological role, cell signaling peptide that may regulate plant stress, growth, and development. Mediates a rapid alkalinization of extracellular space by mediating a transient increase in the cytoplasmic Ca(2+) concentration leading to a calcium-dependent signaling events through a cell surface receptor and a concomitant activation of some intracellular mitogen-activated protein kinases. This Arabidopsis thaliana (Mouse-ear cress) protein is Protein RALF-like 29 (RALFL29).